A 414-amino-acid chain; its full sequence is Esterase FrsA (414 aa).

It belongs to the FrsA family.

The catalysed reaction is a carboxylic ester + H2O = an alcohol + a carboxylate + H(+). Functionally, catalyzes the hydrolysis of esters. This chain is Esterase FrsA, found in Escherichia coli O127:H6 (strain E2348/69 / EPEC).